The sequence spans 132 residues: UPF0201 protein MTH_433 (132 aa).

Belongs to the UPF0201 family.

This chain is UPF0201 protein MTH_433, found in Methanothermobacter thermautotrophicus (strain ATCC 29096 / DSM 1053 / JCM 10044 / NBRC 100330 / Delta H) (Methanobacterium thermoautotrophicum).